Here is a 334-residue protein sequence, read N- to C-terminus: Procathepsin L (334 aa).

Residues 1 to 17 (MNLLLLLAVLCLGTALA) form the signal peptide. Residues 18–113 (TPKFDQTFSA…RLFQEPLMLK (96 aa)) constitute a propeptide, activation peptide. Position 122 (E122) interacts with Zn(2+). 2 disulfide bridges follow: C135/C178 and C169/C211. The active site involves C138. E163, D184, E199, and E205 together coordinate Zn(2+). N221 carries N-linked (GlcNAc...) (high mannose) asparagine glycosylation. D227, D250, H253, and D275 together coordinate Zn(2+). C269 and C322 form a disulfide bridge. The active site involves H276. Positions 289-290 (DS) are excised as a propeptide. The active site involves N300.

The protein belongs to the peptidase C1 family. As to quaternary structure, dimer of a heavy and a light chain linked by disulfide bonds. Interacts with Long isoform of CD74/Ii chain; the interaction stabilizes the conformation of mature CTSL. Post-translationally, during export along the endocytic pathway, pro-CTSL undergoes several proteolytic cleavages to generate the CTSL single-chain and two-chain mature forms, composed of a heavy chain linked to a light chain by disulfide bonds. Autocleavage; produces the single-chain CTSL after cleavage of the propeptide. The cleavage can be intermolecular. As to expression, expressed in thymus, kidney and liver. Expressed in thyroid epithelial cells. Expressed in cortical thymic epithelial cells. Expressed by antigen presenting cells (APCs) such as dendritic cells and macrophages.

The protein localises to the lysosome. The protein resides in the apical cell membrane. Its subcellular location is the secreted. It is found in the extracellular space. It localises to the cytoplasmic vesicle. The protein localises to the secretory vesicle. The protein resides in the chromaffin granule. It catalyses the reaction Specificity close to that of papain. As compared to cathepsin B, cathepsin L exhibits higher activity toward protein substrates, but has little activity on Z-Arg-Arg-NHMec, and no peptidyl-dipeptidase activity.. Long isoform of CD74/Ii chain stabilizes the conformation of mature CTSL by binding to its active site and serving as a chaperone to help maintain a pool of mature enzyme in endocytic compartments and extracellular space of APCs. IFNG enhances the conversion into the CTSL mature and active form. Inhibited by CST6. Inhibited by the glycopeptide antibiotic teicoplanin. Inhibited by amantadine. In terms of biological role, thiol protease important for the overall degradation of proteins in lysosomes. Involved in the solubilization of cross-linked TG/thyroglobulin and in the subsequent release of thyroid hormone thyroxine (T4) by limited proteolysis of TG/thyroglobulin in the thyroid follicle lumen. In neuroendocrine chromaffin cells secretory vesicles, catalyzes the prohormone proenkephalin processing to the active enkephalin peptide neurotransmitter. In thymus, regulates CD4(+) T cell positive selection by generating the major histocompatibility complex class II (MHCII) bound peptide ligands presented by cortical thymic epithelial cells. Also mediates invariant chain processing in cortical thymic epithelial cells. Major elastin-degrading enzyme at neutral pH. Accumulates as a mature and active enzyme in the extracellular space of antigen presenting cells (APCs) to regulate degradation of the extracellular matrix in the course of inflammation. Secreted form generates endostatin from COL18A1. Critical for cardiac morphology and function. Plays an important role in hair follicle morphogenesis and cycling, as well as epidermal differentiation. Required for maximal stimulation of steroidogenesis by TIMP1. The chain is Procathepsin L from Mus musculus (Mouse).